The chain runs to 416 residues: Heat shock protein DDB_G0280215 (416 aa).

Positions 37–150 (SMDWGWKPRM…SQHISLFGRE (114 aa)) constitute a sHSP domain. Residues 216–235 (ETKERERRIRDTKGETEKKK) are disordered.

Belongs to the small heat shock protein (HSP20) family.

The chain is Heat shock protein DDB_G0280215 from Dictyostelium discoideum (Social amoeba).